Here is a 327-residue protein sequence, read N- to C-terminus: L-lactate dehydrogenase 1 (327 aa).

NAD(+) is bound by residues Val-21, Asp-42, Lys-47, Tyr-72, and 86–87 (GA). Substrate is bound by residues Gln-89, Arg-95, and 127 to 130 (NPVD). Residues 125–127 (AAN) and Ser-150 each bind NAD(+). Residue 155–158 (DSAR) coordinates substrate. Positions 160 and 175 each coordinate beta-D-fructose 1,6-bisphosphate. Catalysis depends on His-182, which acts as the Proton acceptor. Tyr-227 carries the phosphotyrosine modification. Thr-236 serves as a coordination point for substrate.

Belongs to the LDH/MDH superfamily. LDH family. As to quaternary structure, homotetramer.

The protein localises to the cytoplasm. It catalyses the reaction (S)-lactate + NAD(+) = pyruvate + NADH + H(+). It functions in the pathway fermentation; pyruvate fermentation to lactate; (S)-lactate from pyruvate: step 1/1. With respect to regulation, allosterically activated by fructose 1,6-bisphosphate (FBP). Its function is as follows. Catalyzes the conversion of lactate to pyruvate. In Enterococcus faecalis (strain ATCC 700802 / V583), this protein is L-lactate dehydrogenase 1.